The primary structure comprises 128 residues: Saitohin (128 aa).

Residues 77–87 (SYSSEENSRNG) are compositionally biased toward polar residues. A disordered region spans residues 77-128 (SYSSEENSRNGAEQGRQLSIEGPFQGQNCPSHPAAALPLPMRGESQATSCQV).

Interacts with PRDX6.

The protein resides in the cytoplasm. It localises to the nucleus. This is Saitohin (STH) from Pan troglodytes (Chimpanzee).